The primary structure comprises 460 residues: 3-ketoacyl-CoA synthase 7 (460 aa).

Residues 21-41 (FHQFLVASACVLIAVFGYYFF) traverse the membrane as a helical segment. An FAE domain is found at 38–328 (YYFFKPRCII…YIISFIQRKW (291 aa)). Catalysis depends on residues Cys-183, His-262, His-345, His-349, and Asn-382.

The protein belongs to the thiolase-like superfamily. Chalcone/stilbene synthases family. In terms of tissue distribution, expressed in flowers.

The protein localises to the membrane. It carries out the reaction a very-long-chain acyl-CoA + malonyl-CoA + H(+) = a very-long-chain 3-oxoacyl-CoA + CO2 + CoA. The protein operates within lipid metabolism; fatty acid biosynthesis. This Arabidopsis thaliana (Mouse-ear cress) protein is 3-ketoacyl-CoA synthase 7.